A 352-amino-acid polypeptide reads, in one-letter code: Holliday junction branch migration complex subunit RuvB (352 aa).

The large ATPase domain (RuvB-L) stretch occupies residues 4-185 (ADRLIAATGP…FGIVQRLEFY (182 aa)). ATP-binding positions include Ile24, Arg25, Gly66, Lys69, Thr70, Thr71, 132–134 (EDF), Arg175, Tyr185, and Arg222. Thr70 is a Mg(2+) binding site. Residues 186-256 (STADLATIVS…VADLALNLLD (71 aa)) form a small ATPAse domain (RuvB-S) region. The segment at 259 to 352 (EHGFDHQDRR…VDEFLDAVDD (94 aa)) is head domain (RuvB-H). Positions 295, 314, and 319 each coordinate DNA.

The protein belongs to the RuvB family. In terms of assembly, homohexamer. Forms an RuvA(8)-RuvB(12)-Holliday junction (HJ) complex. HJ DNA is sandwiched between 2 RuvA tetramers; dsDNA enters through RuvA and exits via RuvB. An RuvB hexamer assembles on each DNA strand where it exits the tetramer. Each RuvB hexamer is contacted by two RuvA subunits (via domain III) on 2 adjacent RuvB subunits; this complex drives branch migration. In the full resolvosome a probable DNA-RuvA(4)-RuvB(12)-RuvC(2) complex forms which resolves the HJ.

The protein localises to the cytoplasm. It catalyses the reaction ATP + H2O = ADP + phosphate + H(+). In terms of biological role, the RuvA-RuvB-RuvC complex processes Holliday junction (HJ) DNA during genetic recombination and DNA repair, while the RuvA-RuvB complex plays an important role in the rescue of blocked DNA replication forks via replication fork reversal (RFR). RuvA specifically binds to HJ cruciform DNA, conferring on it an open structure. The RuvB hexamer acts as an ATP-dependent pump, pulling dsDNA into and through the RuvAB complex. RuvB forms 2 homohexamers on either side of HJ DNA bound by 1 or 2 RuvA tetramers; 4 subunits per hexamer contact DNA at a time. Coordinated motions by a converter formed by DNA-disengaged RuvB subunits stimulates ATP hydrolysis and nucleotide exchange. Immobilization of the converter enables RuvB to convert the ATP-contained energy into a lever motion, pulling 2 nucleotides of DNA out of the RuvA tetramer per ATP hydrolyzed, thus driving DNA branch migration. The RuvB motors rotate together with the DNA substrate, which together with the progressing nucleotide cycle form the mechanistic basis for DNA recombination by continuous HJ branch migration. Branch migration allows RuvC to scan DNA until it finds its consensus sequence, where it cleaves and resolves cruciform DNA. The chain is Holliday junction branch migration complex subunit RuvB from Pseudomonas fluorescens (strain SBW25).